The sequence spans 235 residues: Small ribosomal subunit protein uS3 (235 aa).

Residues 39-107 (IREILHKELK…DVVINIVEIR (69 aa)) enclose the KH type-2 domain. Positions 215–235 (QDKRMAEGDGGGSSRPRRDAA) are disordered.

The protein belongs to the universal ribosomal protein uS3 family. As to quaternary structure, part of the 30S ribosomal subunit. Forms a tight complex with proteins S10 and S14.

Binds the lower part of the 30S subunit head. Binds mRNA in the 70S ribosome, positioning it for translation. The protein is Small ribosomal subunit protein uS3 of Rhodopseudomonas palustris (strain ATCC BAA-98 / CGA009).